Here is a 284-residue protein sequence, read N- to C-terminus: Shikimate kinase (284 aa).

An ATP-binding site is contributed by 85–95; it reads PLAAGLKSSSA.

This sequence belongs to the GHMP kinase family. Archaeal shikimate kinase subfamily.

Its subcellular location is the cytoplasm. It catalyses the reaction shikimate + ATP = 3-phosphoshikimate + ADP + H(+). Its pathway is metabolic intermediate biosynthesis; chorismate biosynthesis; chorismate from D-erythrose 4-phosphate and phosphoenolpyruvate: step 5/7. The protein is Shikimate kinase of Halobacterium salinarum (strain ATCC 29341 / DSM 671 / R1).